A 559-amino-acid polypeptide reads, in one-letter code: Formate--tetrahydrofolate ligase (559 aa).

66–73 is an ATP binding site; the sequence is TPPGEGKT.

It belongs to the formate--tetrahydrofolate ligase family.

The catalysed reaction is (6S)-5,6,7,8-tetrahydrofolate + formate + ATP = (6R)-10-formyltetrahydrofolate + ADP + phosphate. Its pathway is one-carbon metabolism; tetrahydrofolate interconversion. This Nocardioides sp. (strain ATCC BAA-499 / JS614) protein is Formate--tetrahydrofolate ligase.